The sequence spans 510 residues: ATP synthase subunit alpha (510 aa).

169–176 (GDRQTGKT) is a binding site for ATP.

It belongs to the ATPase alpha/beta chains family. In terms of assembly, F-type ATPases have 2 components, CF(1) - the catalytic core - and CF(0) - the membrane proton channel. CF(1) has five subunits: alpha(3), beta(3), gamma(1), delta(1), epsilon(1). CF(0) has four main subunits: a(1), b(1), b'(1) and c(9-12).

The protein resides in the cell inner membrane. The catalysed reaction is ATP + H2O + 4 H(+)(in) = ADP + phosphate + 5 H(+)(out). Its function is as follows. Produces ATP from ADP in the presence of a proton gradient across the membrane. The alpha chain is a regulatory subunit. This is ATP synthase subunit alpha from Rhodopseudomonas palustris (strain HaA2).